A 114-amino-acid chain; its full sequence is MHTAIQELEKAQLRSDVPDFRPGDTLNVHVRVTEGNRTRIQVFKGVVIRRQGSGIRETFTVRKISYAVGVERTFPVHSPVIEKIEVVSRGRVRRAKLYYLRNLRGKAARIRERR.

The protein belongs to the bacterial ribosomal protein bL19 family.

In terms of biological role, this protein is located at the 30S-50S ribosomal subunit interface and may play a role in the structure and function of the aminoacyl-tRNA binding site. The protein is Large ribosomal subunit protein bL19 of Thermobifida fusca (strain YX).